Reading from the N-terminus, the 90-residue chain is Defensin-like protein 178 (90 aa).

Positions Met1–Gln23 are cleaved as a signal peptide. Intrachain disulfides connect Cys27/Cys66, Cys36/Cys55, Cys39/Cys60, and Cys43/Cys62.

This sequence belongs to the DEFL family.

The protein resides in the secreted. In Arabidopsis thaliana (Mouse-ear cress), this protein is Defensin-like protein 178 (LCR64).